Here is a 344-residue protein sequence, read N- to C-terminus: Phenylalanine--tRNA ligase alpha subunit (344 aa).

Glu-256 lines the Mg(2+) pocket.

This sequence belongs to the class-II aminoacyl-tRNA synthetase family. Phe-tRNA synthetase alpha subunit type 1 subfamily. As to quaternary structure, tetramer of two alpha and two beta subunits. Mg(2+) is required as a cofactor.

The protein localises to the cytoplasm. It catalyses the reaction tRNA(Phe) + L-phenylalanine + ATP = L-phenylalanyl-tRNA(Phe) + AMP + diphosphate + H(+). This Bacillus mycoides (strain KBAB4) (Bacillus weihenstephanensis) protein is Phenylalanine--tRNA ligase alpha subunit.